The primary structure comprises 343 residues: tRNA N6-adenosine threonylcarbamoyltransferase (343 aa).

2 residues coordinate Fe cation: H120 and H124. Substrate-binding positions include 142-146, D175, G188, D192, and N281; that span reads VVSGG. D310 provides a ligand contact to Fe cation.

The protein belongs to the KAE1 / TsaD family. Fe(2+) is required as a cofactor.

Its subcellular location is the cytoplasm. The catalysed reaction is L-threonylcarbamoyladenylate + adenosine(37) in tRNA = N(6)-L-threonylcarbamoyladenosine(37) in tRNA + AMP + H(+). Required for the formation of a threonylcarbamoyl group on adenosine at position 37 (t(6)A37) in tRNAs that read codons beginning with adenine. Is involved in the transfer of the threonylcarbamoyl moiety of threonylcarbamoyl-AMP (TC-AMP) to the N6 group of A37, together with TsaE and TsaB. TsaD likely plays a direct catalytic role in this reaction. This is tRNA N6-adenosine threonylcarbamoyltransferase from Bacillus thuringiensis subsp. konkukian (strain 97-27).